Here is a 197-residue protein sequence, read N- to C-terminus: Imidazoleglycerol-phosphate dehydratase (197 aa).

It belongs to the imidazoleglycerol-phosphate dehydratase family.

It is found in the cytoplasm. The enzyme catalyses D-erythro-1-(imidazol-4-yl)glycerol 3-phosphate = 3-(imidazol-4-yl)-2-oxopropyl phosphate + H2O. It participates in amino-acid biosynthesis; L-histidine biosynthesis; L-histidine from 5-phospho-alpha-D-ribose 1-diphosphate: step 6/9. The polypeptide is Imidazoleglycerol-phosphate dehydratase (Streptomyces avermitilis (strain ATCC 31267 / DSM 46492 / JCM 5070 / NBRC 14893 / NCIMB 12804 / NRRL 8165 / MA-4680)).